Consider the following 87-residue polypeptide: Developmentally-regulated ectodermal protein (87 aa).

The signal sequence occupies residues 1–16 (MKRLLVLTLVSAILMA).

The sequence is that of Developmentally-regulated ectodermal protein from Tripneustes gratilla (Hawaian sea urchin).